The sequence spans 200 residues: Holliday junction resolvase RecU (200 aa).

Positions 82, 84, 97, and 116 each coordinate Mg(2+).

This sequence belongs to the RecU family. Mg(2+) serves as cofactor.

The protein resides in the cytoplasm. It catalyses the reaction Endonucleolytic cleavage at a junction such as a reciprocal single-stranded crossover between two homologous DNA duplexes (Holliday junction).. Functionally, endonuclease that resolves Holliday junction intermediates in genetic recombination. Cleaves mobile four-strand junctions by introducing symmetrical nicks in paired strands. Promotes annealing of linear ssDNA with homologous dsDNA. Required for DNA repair, homologous recombination and chromosome segregation. The polypeptide is Holliday junction resolvase RecU (Streptococcus gordonii (strain Challis / ATCC 35105 / BCRC 15272 / CH1 / DL1 / V288)).